The sequence spans 455 residues: Chromosomal replication initiator protein DnaA (455 aa).

Residues 1-74 (MFDIEKFWQH…IQSAYGYAGI (74 aa)) form a domain I, interacts with DnaA modulators region. The interval 74 to 117 (IEILPVFQINENNDSPERIVTPEPRYAIQLQQEKRAHKQFTKNL) is domain II. Residues 118-334 (KLNEKYTFDN…GALVKVQAYA (217 aa)) are domain III, AAA+ region. 4 residues coordinate ATP: Gly-162, Gly-164, Lys-165, and Thr-166. Residues 335–455 (TIERADINVN…VFDLKQMIEH (121 aa)) form a domain IV, binds dsDNA region.

This sequence belongs to the DnaA family. Oligomerizes as a right-handed, spiral filament on DNA at oriC.

The protein localises to the cytoplasm. Plays an essential role in the initiation and regulation of chromosomal replication. ATP-DnaA binds to the origin of replication (oriC) to initiate formation of the DNA replication initiation complex once per cell cycle. Binds the DnaA box (a 9 base pair repeat at the origin) and separates the double-stranded (ds)DNA. Forms a right-handed helical filament on oriC DNA; dsDNA binds to the exterior of the filament while single-stranded (ss)DNA is stabiized in the filament's interior. The ATP-DnaA-oriC complex binds and stabilizes one strand of the AT-rich DNA unwinding element (DUE), permitting loading of DNA polymerase. After initiation quickly degrades to an ADP-DnaA complex that is not apt for DNA replication. Binds acidic phospholipids. The polypeptide is Chromosomal replication initiator protein DnaA (Lactobacillus helveticus (strain DPC 4571)).